Reading from the N-terminus, the 58-residue chain is MAVPKKKTSKAKRNQRSATWKGKAAIAAKRAMSIGKSVLSGRAQGFVYPVSDTDEAEA.

Residues 1–15 are compositionally biased toward basic residues; it reads MAVPKKKTSKAKRNQ. Residues 1 to 23 form a disordered region; it reads MAVPKKKTSKAKRNQRSATWKGK.

Belongs to the bacterial ribosomal protein bL32 family.

The sequence is that of Large ribosomal subunit protein bL32 from Synechococcus sp. (strain CC9902).